A 351-amino-acid polypeptide reads, in one-letter code: MIIMKVLMPSIYYPYIGGITLHVENLVKRLKDIEFHILTYDSYEENEYKNVIIHNVPHLKKFRGISYLINAYKIGKNIIESEGIDLIHSHYAFPQGCVGALLKNKLSIPHILTLHGSDALILKNSIKGRYFFKYATTNSDKIICVSKYIKNQLDENLKNRAIVIYNGVNKEILYNEGDYNFGLFVGAFVPQKGVDILIDAIKDIDFNFKLIGDGKLYKKIENFVVKNNLSHIELLGRKSFDEVASFMRKCSFLVVPSRSEGFGMVAVEGMACSKPVIATRVGGLGEIVIDGYNGLLAEKNNPNDLKEKILELINNEELRKTLGENGKEFSKKFSWEKCVMGVRKVYEELSD.

Belongs to the glycosyltransferase group 1 family. Glycosyltransferase 4 subfamily.

This is an uncharacterized protein from Methanocaldococcus jannaschii (strain ATCC 43067 / DSM 2661 / JAL-1 / JCM 10045 / NBRC 100440) (Methanococcus jannaschii).